The chain runs to 190 residues: C-type lectin domain family 5 member A (190 aa).

Residues 1 to 4 are Cytoplasmic-facing; the sequence is MNWH. Residues 5–25 form a helical; Signal-anchor for type II membrane protein membrane-spanning segment; it reads MIISGLIVVVIKVVGMTFFLL. The Extracellular portion of the chain corresponds to 26 to 190; that stretch reads YFPQVFGKSN…YRWICEMNAK (165 aa). Asn-51, Asn-146, and Asn-153 each carry an N-linked (GlcNAc...) asparagine glycan. Positions 80–186 constitute a C-type lectin domain; that stretch reads HQGKCFFFSF…CEVSYRWICE (107 aa). 2 disulfide bridges follow: Cys-101–Cys-185 and Cys-163–Cys-177.

Monomer. Homodimer. The majority of CLEC5A is expressed as a monomeric form on macrophages. Interacts with TYROBP/DAP12. The interaction with TYROBP is required for CLEC5 cell surface expression. Interacts with HCST/DAP10. Forms a CLEC5A/TYROBP/HCST trimolecular complex depending almost solely on TYROBP. N-glycosylated. Contains sialic acid residues. As to expression, strong expression in bone marrow cells and thioglycollate-induced neutrophils (at protein level). Expressed on granulocytes and monocytes from bone marrow and peripheral blood. Expressed in macrophage cell line J-774, but not in T-cell lines, B-cell lines, or mast cell lines.

Its subcellular location is the cell membrane. Functionally, functions as a positive regulator of osteoclastogenesis. Cell surface receptor that signals via TYROBP. Regulates inflammatory responses. The protein is C-type lectin domain family 5 member A (Clec5a) of Mus musculus (Mouse).